A 387-amino-acid chain; its full sequence is Protein salvador homolog 1 (387 aa).

2 positions are modified to phosphoserine: Ser-95 and Ser-138. WW domains follow at residues 201-234 (LPLP…HPLE) and 236-269 (EGLP…HPCA). A Phosphothreonine modification is found at Thr-212. Residues 323–370 (ILKWELFQLADLDTYQGMLKLLFMKELEQIVKLYEAYRQALVTELENR) form the SARAH domain.

Homodimer. Stabilized through interaction with STK3/MST2 or STK4/MST1. Interacts (via SARAH domain) with isoform 1 of NEK2. Interacts with ESR1 only in the presence of STK3/MST2. Interacts with WTIP and AJUBA. Phosphorylated by STK3/MST2 and STK4/MST1. Phosphorylation is not required for SAV1 stability and may increase the number of protein binding sites on the scaffold molecule.

The protein localises to the nucleus. Its subcellular location is the cytoplasm. Its function is as follows. Regulator of STK3/MST2 and STK4/MST1 in the Hippo signaling pathway which plays a pivotal role in organ size control and tumor suppression by restricting proliferation and promoting apoptosis. The core of this pathway is composed of a kinase cascade wherein STK3/MST2 and STK4/MST1, in complex with its regulatory protein SAV1, phosphorylates and activates LATS1/2 in complex with its regulatory protein MOB1, which in turn phosphorylates and inactivates YAP1 oncoprotein and WWTR1/TAZ. Phosphorylation of YAP1 by LATS1/2 inhibits its translocation into the nucleus to regulate cellular genes important for cell proliferation, cell death, and cell migration. SAV1 is required for STK3/MST2 and STK4/MST1 activation and promotes cell-cycle exit and terminal differentiation in developing epithelial tissues. Plays a role in centrosome disjunction by regulating the localization of NEK2 to centrosomes, and its ability to phosphorylate CROCC and CEP250. In conjunction with STK3/MST2, activates the transcriptional activity of ESR1 through the modulation of its phosphorylation. The polypeptide is Protein salvador homolog 1 (Rattus norvegicus (Rat)).